Reading from the N-terminus, the 120-residue chain is Succinate dehydrogenase assembly factor 3, mitochondrial (120 aa).

The N-terminal 36 residues, 1 to 36, are a transit peptide targeting the mitochondrion; it reads MSRILMSQLTHPQRVRLLYKTILRLHRGLPAELRAL.

The protein belongs to the complex I LYR family. SDHAF3 subfamily. Interacts with SdhB within an SdhA-SdhB subcomplex.

The protein resides in the mitochondrion matrix. Plays an essential role in the assembly of succinate dehydrogenase (SDH), an enzyme complex (also referred to as respiratory complex II) that is a component of both the tricarboxylic acid (TCA) cycle and the mitochondrial electron transport chain, and which couples the oxidation of succinate to fumarate with the reduction of ubiquinone (coenzyme Q) to ubiquinol. Promotes maturation of the iron-sulfur protein subunit SdhB of the SDH catalytic dimer, protecting it from the deleterious effects of oxidants. This Drosophila melanogaster (Fruit fly) protein is Succinate dehydrogenase assembly factor 3, mitochondrial.